The primary structure comprises 317 residues: Glucokinase (317 aa).

The protein belongs to the ROK (NagC/XylR) family. As to quaternary structure, homodimer. A divalent metal cation serves as cofactor.

It carries out the reaction D-glucose + ATP = D-glucose 6-phosphate + ADP + H(+). In terms of biological role, catalyzes the phosphorylation of D-glucose to D-glucose 6-phosphate using ATP as the phosphate donor. Can also phosphorylate 2-deoxyglucose, with lower efficiency. ITP can also serve as a phosphoryl donor. This chain is Glucokinase, found in Thermotoga maritima (strain ATCC 43589 / DSM 3109 / JCM 10099 / NBRC 100826 / MSB8).